A 280-amino-acid chain; its full sequence is Large ribosomal subunit protein uL2 (280 aa).

Disordered stretches follow at residues 1 to 25 (MGIRKYRPMTPGTRQRSGADFAEVT) and 230 to 280 (HPHG…SGRG). The span at 257–280 (KTRKRRKPSSKFIIRRRKTASGRG) shows a compositional bias: basic residues.

The protein belongs to the universal ribosomal protein uL2 family. In terms of assembly, part of the 50S ribosomal subunit. Forms a bridge to the 30S subunit in the 70S ribosome.

Its function is as follows. One of the primary rRNA binding proteins. Required for association of the 30S and 50S subunits to form the 70S ribosome, for tRNA binding and peptide bond formation. It has been suggested to have peptidyltransferase activity; this is somewhat controversial. Makes several contacts with the 16S rRNA in the 70S ribosome. The polypeptide is Large ribosomal subunit protein uL2 (Gloeobacter violaceus (strain ATCC 29082 / PCC 7421)).